The chain runs to 183 residues: MSQARFIAFSDGSALVNPGGPGGTGFVVLDRARPAYRFGGTRWVEDGPNAVTNNRMELRAVLEALEGLPGGEQVEVISDSRYVVDALSRWIHGWRKKGWRTASGEPVLNRDLIEALDARASALSVRYTWVRGHDGHAVNEVVDQLAQAAARGVAGPGEAEVVAALRAEAFLAGGPAAPRSSRA.

One can recognise an RNase H type-1 domain in the interval 2 to 151; sequence SQARFIAFSD…VDQLAQAAAR (150 aa). 4 residues coordinate Mg(2+): D11, E57, D79, and D143.

It belongs to the RNase H family. Monomer. Mg(2+) is required as a cofactor.

The protein resides in the cytoplasm. It catalyses the reaction Endonucleolytic cleavage to 5'-phosphomonoester.. Its function is as follows. Endonuclease that specifically degrades the RNA of RNA-DNA hybrids. The sequence is that of Ribonuclease H from Anaeromyxobacter sp. (strain K).